Consider the following 1405-residue polypeptide: Sterol 3-beta-glucosyltransferase (1405 aa).

Composition is skewed to basic and acidic residues over residues 1–16 and 95–105; these read MRPF…DRKL and TGQRPRKESSV. Disordered stretches follow at residues 1–27, 83–186, and 203–230; these read MRPF…SASR, ARFD…SATP, and DLKA…ASVS. Residues 106–115 are compositionally biased toward polar residues; that stretch reads RKGTSVSVNT. Residues 116–126 show a composition bias toward low complexity; it reads SSLDPSQRSSS. The segment covering 206–218 has biased composition (polar residues); it reads ASSTERSQSSLNE. The 40-residue stretch at 246–285 folds into the GRAM 1 domain; that stretch reads EKVLVEYACSLLQSMLLQGYMYVTEGHICFYAYLPKKSTV. The PH domain occupies 285 to 384; sequence VAIKSGYLHK…WVKALQKVIF (100 aa). Disordered stretches follow at residues 461-526 and 566-642; these read SQHL…DSSD and TIYG…SGAP. A compositionally biased stretch (polar residues) spans 483–493; it reads RWSLTSGTSRA. A compositionally biased stretch (basic and acidic residues) spans 570 to 589; that stretch reads LDRRPSGRERRGRRNSDETA. The segment covering 590-603 has biased composition (polar residues); sequence RSPSTRVNVGTGQQ. Positions 606–624 are enriched in basic and acidic residues; sequence ELDRRTDGNTSGREARDTT. Residues 626 to 642 show a composition bias toward polar residues; it reads ESDQYTQDPTKSFSGAP. The region spanning 724 to 790 is the GRAM 2 domain; it reads DRFRAHFALP…RDIENVEKEK (67 aa). UDP-alpha-D-glucose contacts are provided by Ser911, Arg912, Asp914, Ala1214, His1216, His1229, Gly1233, Thr1234, Asp1253, and Gln1254. Positions 1330–1367 are disordered; the sequence is SIASSTPFSPTPSAKTAAEQDADDDVEDSEEWTFVGDD. Over residues 1332 to 1348 the composition is skewed to low complexity; the sequence is ASSTPFSPTPSAKTAAE. Residues 1349-1367 show a composition bias toward acidic residues; that stretch reads QDADDDVEDSEEWTFVGDD.

Belongs to the glycosyltransferase 28 family.

Its subcellular location is the cytoplasm. The protein localises to the preautophagosomal structure membrane. The enzyme catalyses a sterol + UDP-alpha-D-glucose = a sterol 3-beta-D-glucoside + UDP + H(+). The catalysed reaction is ergosterol + UDP-alpha-D-glucose = ergosteryl 3-beta-D-glucoside + UDP + H(+). Sterol glycosyltransferase responsible for the glycosylation of ergosterol to form ergosterol-glucoside. The sequence is that of Sterol 3-beta-glucosyltransferase from Aspergillus fumigatus (strain ATCC MYA-4609 / CBS 101355 / FGSC A1100 / Af293) (Neosartorya fumigata).